Reading from the N-terminus, the 203-residue chain is Sarcosine oxidase subunit gamma (203 aa).

Belongs to the SoxG family. In terms of assembly, heterotetramer composed of subunits alpha (SoxA), beta (SoxB), gamma (SoxG) and delta (SoxD).

It is found in the cytoplasm. The enzyme catalyses sarcosine + (6S)-5,6,7,8-tetrahydrofolate + O2 = (6R)-5,10-methylene-5,6,7,8-tetrahydrofolate + glycine + H2O2. It carries out the reaction sarcosine + O2 + H2O = formaldehyde + glycine + H2O2. Functionally, in the presence of tetrahydrofolate, catalyzes the oxidative demethylation of sarcosine to yield glycine, 5,10-methylenetetrahydrofolate and hydrogen peroxide. In the absence of tetrahydrofolate, catalyzes the oxidative demethylation of sarcosine to yield glycine, formaldehyde and hydrogen peroxide. The polypeptide is Sarcosine oxidase subunit gamma (soxG) (Arthrobacter sp).